Here is a 76-residue protein sequence, read N- to C-terminus: Amyloid protein A (76 aa).

The protein belongs to the SAA family. In terms of tissue distribution, expressed by the liver; secreted in plasma.

The protein localises to the secreted. In terms of biological role, major acute phase reactant. Apolipoprotein of the HDL complex. The sequence is that of Amyloid protein A (SAA1) from Macaca mulatta (Rhesus macaque).